The sequence spans 186 residues: Probable nicotinate-nucleotide adenylyltransferase (186 aa).

The protein belongs to the NadD family.

The enzyme catalyses nicotinate beta-D-ribonucleotide + ATP + H(+) = deamido-NAD(+) + diphosphate. Its pathway is cofactor biosynthesis; NAD(+) biosynthesis; deamido-NAD(+) from nicotinate D-ribonucleotide: step 1/1. Functionally, catalyzes the reversible adenylation of nicotinate mononucleotide (NaMN) to nicotinic acid adenine dinucleotide (NaAD). In Tropheryma whipplei (strain TW08/27) (Whipple's bacillus), this protein is Probable nicotinate-nucleotide adenylyltransferase.